The primary structure comprises 547 residues: Probable bifunctional tRNA threonylcarbamoyladenosine biosynthesis protein (547 aa).

The interval 1–329 (MDTSKDLICI…YRSDMVEVNW (329 aa)) is kae1. 3 residues coordinate Fe cation: H112, H116, and Y133. Residues 133 to 137 (YVSGG), D165, G178, E182, and N262 each bind L-threonylcarbamoyladenylate. D290 provides a ligand contact to Fe cation. Residues 346–547 (IIPEHLIGKG…KEVEKRARYL (202 aa)) form the Protein kinase domain. Residues 352–360 (IGKGAEADI) and K373 each bind ATP. The active-site Proton acceptor; for kinase activity is the D465.

It in the N-terminal section; belongs to the KAE1 / TsaD family. The protein in the C-terminal section; belongs to the protein kinase superfamily. Tyr protein kinase family. BUD32 subfamily. As to quaternary structure, component of the KEOPS complex that consists of Kae1, Bud32, Cgi121 and Pcc1; the whole complex dimerizes. It depends on Fe(2+) as a cofactor.

The protein resides in the cytoplasm. The enzyme catalyses L-seryl-[protein] + ATP = O-phospho-L-seryl-[protein] + ADP + H(+). It catalyses the reaction L-threonyl-[protein] + ATP = O-phospho-L-threonyl-[protein] + ADP + H(+). It carries out the reaction L-threonylcarbamoyladenylate + adenosine(37) in tRNA = N(6)-L-threonylcarbamoyladenosine(37) in tRNA + AMP + H(+). In terms of biological role, required for the formation of a threonylcarbamoyl group on adenosine at position 37 (t(6)A37) in tRNAs that read codons beginning with adenine. Is a component of the KEOPS complex that is probably involved in the transfer of the threonylcarbamoyl moiety of threonylcarbamoyl-AMP (TC-AMP) to the N6 group of A37. The Kae1 domain likely plays a direct catalytic role in this reaction. The Bud32 domain probably displays kinase activity that regulates Kae1 function. This chain is Probable bifunctional tRNA threonylcarbamoyladenosine biosynthesis protein, found in Methanococcus maripaludis (strain C7 / ATCC BAA-1331).